The following is a 159-amino-acid chain: ATP synthase subunit b (159 aa).

The helical transmembrane segment at 4-24 (VGINGTLIVQLVTFVILVALL) threads the bilayer.

Belongs to the ATPase B chain family. As to quaternary structure, F-type ATPases have 2 components, F(1) - the catalytic core - and F(0) - the membrane proton channel. F(1) has five subunits: alpha(3), beta(3), gamma(1), delta(1), epsilon(1). F(0) has three main subunits: a(1), b(2) and c(10-14). The alpha and beta chains form an alternating ring which encloses part of the gamma chain. F(1) is attached to F(0) by a central stalk formed by the gamma and epsilon chains, while a peripheral stalk is formed by the delta and b chains.

The protein localises to the cell inner membrane. Its function is as follows. F(1)F(0) ATP synthase produces ATP from ADP in the presence of a proton or sodium gradient. F-type ATPases consist of two structural domains, F(1) containing the extramembraneous catalytic core and F(0) containing the membrane proton channel, linked together by a central stalk and a peripheral stalk. During catalysis, ATP synthesis in the catalytic domain of F(1) is coupled via a rotary mechanism of the central stalk subunits to proton translocation. Functionally, component of the F(0) channel, it forms part of the peripheral stalk, linking F(1) to F(0). The sequence is that of ATP synthase subunit b from Acidithiobacillus ferridurans.